The sequence spans 490 residues: MSDLTTRTAAELAQQIHAREISSVEVTQAHLDRIAEVDGELNAFLHVAGERALEAAAAVDAALAAGEAPASPLAGVPLALKDVFTTTDMPTTCASKILEGWMSPYDATVTTKLRAAGIPILGKTNMDEFAMGSSTENSAYGPTRNPWDTTRIPGGSGGGSAAALASRQAPLAIGTDTGGSIRQPAAVTATVGTKPTYGTVSRYGLVACASSLDQGGPCGRTVLDTALLHEVIAGYDPRDSTSRDVPVPPVVEAARRGAAGDLRGVKVGVVKELHSDSYQPGVLASFDAAVAVLKDLGAEVVEVSCPHFEYGLPSYYLVMPSEVSSNLARFDAMRYGLRVGDDGTHSAEQVMAMTRAAGFGPEVKRRIMIGTYALSAGYYDEYYGQALKVRTLIARDFDRAYEQVDVLVSPTSPFTPWKLGEKVDDPLAMYLSDLCTLPTNLAGHPAMSVPSGLSKDDGMPVGLQIMAPALADDRLYRVGAAYEAARGPIA.

Active-site charge relay system residues include lysine 81 and serine 156. The active-site Acyl-ester intermediate is serine 180.

Belongs to the amidase family. GatA subfamily. As to quaternary structure, heterotrimer of A, B and C subunits.

It catalyses the reaction L-glutamyl-tRNA(Gln) + L-glutamine + ATP + H2O = L-glutaminyl-tRNA(Gln) + L-glutamate + ADP + phosphate + H(+). Functionally, allows the formation of correctly charged Gln-tRNA(Gln) through the transamidation of misacylated Glu-tRNA(Gln) in organisms which lack glutaminyl-tRNA synthetase. The reaction takes place in the presence of glutamine and ATP through an activated gamma-phospho-Glu-tRNA(Gln). The chain is Glutamyl-tRNA(Gln) amidotransferase subunit A from Nocardia farcinica (strain IFM 10152).